A 396-amino-acid chain; its full sequence is MAKLDAYFGEYGGQYVPQILVPALDQLEQAFIDAQADPEFRSEFMTLLQEYAGRPTALTLTRNLTKGTKTKLYLKREDLLHGGAHKTNQVLGQALLAKRMGKQEIIAETGAGQHGVATALACALLGLKCRVYMGAKDVERQSPNVFRMKLMGAEVIPVHSGSSTLKDACNEALRDWSATYEDAHYLLGTAAGPHPFPTIVRDFQRMIGEETKNQILAREGRLPDAVIACVGGGSNAIGMFADFIEEESVRLIGVEPAGKGIDTDQHGAPLKHGKTGIFFGMKAPLMQDENGQVEESYSVSAGLDFPSVGPQHAHLNAIGRAEYDNVTDDEALEAFQLIARKEGIIAALESSHALAHAVKMAHDDPEKEQLLVVNLSGRGDKDIFSVHDILKEKGAL.

Position 86 is an N6-(pyridoxal phosphate)lysine (Lys86).

The protein belongs to the TrpB family. As to quaternary structure, tetramer of two alpha and two beta chains. Requires pyridoxal 5'-phosphate as cofactor.

The enzyme catalyses (1S,2R)-1-C-(indol-3-yl)glycerol 3-phosphate + L-serine = D-glyceraldehyde 3-phosphate + L-tryptophan + H2O. It participates in amino-acid biosynthesis; L-tryptophan biosynthesis; L-tryptophan from chorismate: step 5/5. Its function is as follows. The beta subunit is responsible for the synthesis of L-tryptophan from indole and L-serine. The chain is Tryptophan synthase beta chain from Vibrio atlanticus (strain LGP32) (Vibrio splendidus (strain Mel32)).